The chain runs to 37 residues: Large ribosomal subunit protein bL36 (37 aa).

It belongs to the bacterial ribosomal protein bL36 family.

This Nitrosococcus oceani (strain ATCC 19707 / BCRC 17464 / JCM 30415 / NCIMB 11848 / C-107) protein is Large ribosomal subunit protein bL36.